The primary structure comprises 248 residues: Large ribosomal subunit protein uL2 (248 aa).

A disordered region spans residues 203–248 (AHPAGGGHHPKGLTPAPRNAPPGRKVGHIAPRRTGRKKGASRTPTQ). Positions 227–242 (KVGHIAPRRTGRKKGA) are enriched in basic residues.

The protein belongs to the universal ribosomal protein uL2 family. In terms of assembly, part of the 50S ribosomal subunit. Forms a bridge to the 30S subunit in the 70S ribosome.

Its function is as follows. One of the primary rRNA binding proteins. Required for association of the 30S and 50S subunits to form the 70S ribosome, for tRNA binding and peptide bond formation. It has been suggested to have peptidyltransferase activity; this is somewhat controversial. Makes several contacts with the 16S rRNA in the 70S ribosome. The protein is Large ribosomal subunit protein uL2 of Thermofilum pendens (strain DSM 2475 / Hrk 5).